A 526-amino-acid chain; its full sequence is Tyrosine-protein kinase transforming protein Src (526 aa).

A disordered region spans residues 1–52 (MGSSKSKPKDPSQRRRSLEPPDSTHHGGFPASQTPDETAAPDAHRNPSRSFG). Glycine 2 is lipidated: N-myristoyl glycine; by host. Residues 7 to 25 (KPKDPSQRRRSLEPPDSTH) show a composition bias toward basic and acidic residues. The 62-residue stretch at 81–142 (GGVTTFVALY…PSNYVAPSDS (62 aa)) folds into the SH3 domain. The SH2 domain occupies 148–245 (WYFGKITRRE…GLCHRLTNVC (98 aa)). Positions 267 to 517 (LRLEAKLGQG…TFKYLQAQLL (251 aa)) constitute a Protein kinase domain. Residues 273 to 281 (LGQGCFGEV) and lysine 295 contribute to the ATP site. Catalysis depends on aspartate 386, which acts as the Proton acceptor. Tyrosine 416 is modified (phosphotyrosine; by autocatalysis).

Belongs to the protein kinase superfamily. Tyr protein kinase family. SRC subfamily. It depends on Mn(2+) as a cofactor. In terms of processing, the phosphorylated form is termed pp60v-src.

The catalysed reaction is L-tyrosyl-[protein] + ATP = O-phospho-L-tyrosyl-[protein] + ADP + H(+). In terms of biological role, this phosphoprotein, required for both the initiation and the maintenance of neoplastic transformation, is a protein kinase that catalyzes the phosphorylation of tyrosine residues in vitro. In Gallus gallus (Chicken), this protein is Tyrosine-protein kinase transforming protein Src (V-SRC).